The following is a 130-amino-acid chain: Iron-sulfur cluster insertion protein ErpA (130 aa).

3 residues coordinate iron-sulfur cluster: cysteine 58, cysteine 122, and cysteine 124.

This sequence belongs to the HesB/IscA family. In terms of assembly, homodimer. Requires iron-sulfur cluster as cofactor.

Its function is as follows. Required for insertion of 4Fe-4S clusters for at least IspG. The chain is Iron-sulfur cluster insertion protein ErpA from Stenotrophomonas maltophilia (strain R551-3).